Reading from the N-terminus, the 392-residue chain is Pannexin-3 (392 aa).

At 1–39 the chain is on the cytoplasmic side; that stretch reads MSLAHTAAEYMLSDALLPDRRGPRLKGLRLELPLDRIVK. The chain crosses the membrane as a helical span at residues 40 to 60; sequence FVAVGSPLLLMSLAFAQEFSS. Residues 61–113 are Extracellular-facing; sequence GSPISCFSPSNFSIRQAAYVDSSCWDSLLHHKQDGPGQDKMKSLWPHKALPYS. An N-linked (GlcNAc...) asparagine glycan is attached at N71. A helical transmembrane segment spans residues 114-134; it reads LLALALLMYLPVLLWQYAAVP. Residues 135–215 lie on the Cytoplasmic side of the membrane; that stretch reads ALSSDLLFII…VATYLLRNSL (81 aa). A helical membrane pass occupies residues 216 to 236; sequence LLIFTSATYLYLGHFHLDVFF. Residues 237–267 lie on the Extracellular side of the membrane; sequence QEEFSCSIKTGLLSDETHVPNLITCRLTSLS. Residues 268-288 traverse the membrane as a helical segment; that stretch reads IFQIVSLSSVAIYTILVPVII. Topologically, residues 289–392 are cytoplasmic; that stretch reads YNLTRLCRWD…LTNSACDEHP (104 aa).

It belongs to the pannexin family. As to quaternary structure, homoheptameric.

It localises to the cell membrane. The protein resides in the cell junction. Its subcellular location is the gap junction. The protein localises to the endoplasmic reticulum membrane. It carries out the reaction Ca(2+)(in) = Ca(2+)(out). It catalyses the reaction ATP(in) = ATP(out). In terms of biological role, regulator of osteoblast differentiation by functionning as a Ca(2+) channel in the endoplasmic reticulum which regulates calmodulin (CaM) pathways. Allows ATP release into the extracellular space and activation or purinergic receptors. The chain is Pannexin-3 from Homo sapiens (Human).